Consider the following 391-residue polypeptide: Protein-glutamate methylesterase/protein-glutamine glutaminase of group 2 operon (391 aa).

A Response regulatory domain is found at 20-138 (RVMIVDDSVV…EPQAADIFKH (119 aa)). Position 71 is a 4-aspartylphosphate (D71). Residues 196–383 (PTAPRVLLIG…PLNQIGPKVV (188 aa)) enclose the CheB-type methylesterase domain. Residues S207, H235, and D331 contribute to the active site.

It belongs to the CheB family. Phosphorylated by CheA. Phosphorylation of the N-terminal regulatory domain activates the methylesterase activity.

Its subcellular location is the cytoplasm. The enzyme catalyses [protein]-L-glutamate 5-O-methyl ester + H2O = L-glutamyl-[protein] + methanol + H(+). The catalysed reaction is L-glutaminyl-[protein] + H2O = L-glutamyl-[protein] + NH4(+). In terms of biological role, involved in chemotaxis. Part of a chemotaxis signal transduction system that modulates chemotaxis in response to various stimuli. Catalyzes the demethylation of specific methylglutamate residues introduced into the chemoreceptors (methyl-accepting chemotaxis proteins or MCP) by CheR. Also mediates the irreversible deamidation of specific glutamine residues to glutamic acid. In Rhodopseudomonas palustris (strain ATCC BAA-98 / CGA009), this protein is Protein-glutamate methylesterase/protein-glutamine glutaminase of group 2 operon.